The chain runs to 260 residues: 5-oxoprolinase subunit A (260 aa).

Belongs to the LamB/PxpA family. Forms a complex composed of PxpA, PxpB and PxpC.

The enzyme catalyses 5-oxo-L-proline + ATP + 2 H2O = L-glutamate + ADP + phosphate + H(+). Functionally, catalyzes the cleavage of 5-oxoproline to form L-glutamate coupled to the hydrolysis of ATP to ADP and inorganic phosphate. The polypeptide is 5-oxoprolinase subunit A (Methylococcus capsulatus (strain ATCC 33009 / NCIMB 11132 / Bath)).